Reading from the N-terminus, the 445-residue chain is Exodeoxyribonuclease 7 large subunit (445 aa).

The protein belongs to the XseA family. As to quaternary structure, heterooligomer composed of large and small subunits.

It is found in the cytoplasm. The enzyme catalyses Exonucleolytic cleavage in either 5'- to 3'- or 3'- to 5'-direction to yield nucleoside 5'-phosphates.. Bidirectionally degrades single-stranded DNA into large acid-insoluble oligonucleotides, which are then degraded further into small acid-soluble oligonucleotides. The protein is Exodeoxyribonuclease 7 large subunit of Shewanella pealeana (strain ATCC 700345 / ANG-SQ1).